A 249-amino-acid chain; its full sequence is MAYSGAQKALKSDKLDEAQALAKSCAGRPDFLPCDGLSICATHSHGKCFKLHWCCYLGWCHCKYVYQPMTNVAQLPSTPVPAAPSDCPDTIDLSISLTERFLRISPCFQAPPCPESPKYCNIAELFIDDYIVKRINGKMCYVQRPQAHVEPAQMNPIQKQHTEDKQIVEETVKGPKMGHCSSPSTSEDSGINALGGHFLESCEEESEEEDELSTDGHSSPGSLWDQDECTLLSPSKSMVEIIENIETTV.

A disordered region spans residues 174–230; sequence GPKMGHCSSPSTSEDSGINALGGHFLESCEEESEEEDELSTDGHSSPGSLWDQDECT. Positions 201 to 213 are enriched in acidic residues; sequence SCEEESEEEDELS.

The protein belongs to the UPF0524 family.

In terms of biological role, plays a role in neuronal and neurobehavioral development. Required for normal expression of the postmitotic and mature neuron markers elavl3 and eno2 and neurobehaviors related to circadian rhythm and altered light-dark conditions. The sequence is that of UPF0524 protein C3orf70 homolog B from Danio rerio (Zebrafish).